A 261-amino-acid chain; its full sequence is tRNA pseudouridine synthase A (261 aa).

Asp-51 (nucleophile) is an active-site residue. Tyr-109 lines the substrate pocket.

This sequence belongs to the tRNA pseudouridine synthase TruA family. In terms of assembly, homodimer.

The catalysed reaction is uridine(38/39/40) in tRNA = pseudouridine(38/39/40) in tRNA. Its function is as follows. Formation of pseudouridine at positions 38, 39 and 40 in the anticodon stem and loop of transfer RNAs. This Shewanella sp. (strain ANA-3) protein is tRNA pseudouridine synthase A.